Consider the following 179-residue polypeptide: MKTISKQLSAVIFPFIFSACVSQSASSLNHQTAAKARVELALSYLQQNNPQLAKINLDKALQHDKNYYLVHSALAHYYQQQGQIENAFREYEIAVNLNHKQGDVHNNFGTFLCSQKKFEQAQQQFELALNSPNYYHQADTFENIVLCAYSAQKMDIYQQTLEKLRQIDGKRAEKFNSLK.

A signal peptide (or 24) is located at residues 1-27 (MKTISKQLSAVIFPFIFSACVSQSASS).

This is an uncharacterized protein from Haemophilus influenzae (strain ATCC 51907 / DSM 11121 / KW20 / Rd).